Reading from the N-terminus, the 180-residue chain is Large ribosomal subunit protein uL5 (180 aa).

This sequence belongs to the universal ribosomal protein uL5 family. In terms of assembly, part of the 50S ribosomal subunit; part of the 5S rRNA/L5/L18/L25 subcomplex. Contacts the 5S rRNA and the P site tRNA. Forms a bridge to the 30S subunit in the 70S ribosome.

Its function is as follows. This is one of the proteins that bind and probably mediate the attachment of the 5S RNA into the large ribosomal subunit, where it forms part of the central protuberance. In the 70S ribosome it contacts protein S13 of the 30S subunit (bridge B1b), connecting the 2 subunits; this bridge is implicated in subunit movement. Contacts the P site tRNA; the 5S rRNA and some of its associated proteins might help stabilize positioning of ribosome-bound tRNAs. In Brevibacillus brevis (strain 47 / JCM 6285 / NBRC 100599), this protein is Large ribosomal subunit protein uL5.